The following is a 316-amino-acid chain: MSDISKASLPKAIFLMGPTASGKTALAIELRKILPVELISVDSALIYKGMDIGTAKPNAEELLAVPHRLLDIRDPSQAYSAADFRRDALAEMADITAAGRIPLLVGGTMLYFKALLEGLSPLPSADPEVRARIEQQAAEQGWESLHRQLQEVDPVAAARIHPNDPQRLSRALEVFFISGKTLTELTQTSGDALPYQVHQFAIAPASRELLHQRIEQRFHQMLASGFEAEVRALFARGDLHTDLPSIRCVGYRQMWSYLEGEISYDEMVYRGVCATRQLAKRQITWLRGWEGVHWLDSEKPEQARDEVLQVVGAIAG.

Position 17–24 (17–24 (GPTASGKT)) interacts with ATP. 19 to 24 (TASGKT) is a substrate binding site. Interaction with substrate tRNA regions lie at residues 42-45 (DSAL), 166-170 (QRLSR), 247-252 (RCVGYR), and 280-287 (KRQITWLR).

The protein belongs to the IPP transferase family. In terms of assembly, monomer. It depends on Mg(2+) as a cofactor.

It carries out the reaction adenosine(37) in tRNA + dimethylallyl diphosphate = N(6)-dimethylallyladenosine(37) in tRNA + diphosphate. Functionally, catalyzes the transfer of a dimethylallyl group onto the adenine at position 37 in tRNAs that read codons beginning with uridine, leading to the formation of N6-(dimethylallyl)adenosine (i(6)A). The polypeptide is tRNA dimethylallyltransferase (Shigella boydii serotype 18 (strain CDC 3083-94 / BS512)).